A 176-amino-acid chain; its full sequence is Ribosome maturation factor RimM (176 aa).

Residues Pro96–Phe176 enclose the PRC barrel domain.

This sequence belongs to the RimM family. As to quaternary structure, binds ribosomal protein uS19.

It is found in the cytoplasm. In terms of biological role, an accessory protein needed during the final step in the assembly of 30S ribosomal subunit, possibly for assembly of the head region. Essential for efficient processing of 16S rRNA. May be needed both before and after RbfA during the maturation of 16S rRNA. It has affinity for free ribosomal 30S subunits but not for 70S ribosomes. This is Ribosome maturation factor RimM from Shewanella piezotolerans (strain WP3 / JCM 13877).